A 472-amino-acid chain; its full sequence is Pyridine nucleotide-disulfide oxidoreductase domain-containing protein 1 (472 aa).

The protein belongs to the class-I pyridine nucleotide-disulfide oxidoreductase family. PYROXD1 subfamily. The cofactor is FAD.

In terms of biological role, probable oxidoreductase. This Drosophila melanogaster (Fruit fly) protein is Pyridine nucleotide-disulfide oxidoreductase domain-containing protein 1.